A 266-amino-acid chain; its full sequence is GTP cyclohydrolase III (266 aa).

This sequence belongs to the archaeal-type GTP cyclohydrolase family.

The catalysed reaction is GTP + 3 H2O = 2-amino-5-formylamino-6-(5-phospho-D-ribosylamino)pyrimidin-4(3H)-one + 2 phosphate + 2 H(+). Functionally, catalyzes the formation of 2-amino-5-formylamino-6-ribofuranosylamino-4(3H)-pyrimidinone ribonucleotide monophosphate and inorganic phosphate from GTP. Also has an independent pyrophosphate phosphohydrolase activity. The polypeptide is GTP cyclohydrolase III (Methanococcus maripaludis (strain DSM 14266 / JCM 13030 / NBRC 101832 / S2 / LL)).